Consider the following 434-residue polypeptide: Protein maelstrom homolog (434 aa).

Residues 4–73 (RKASRNAYYF…AQGKDPGPSE (70 aa)) constitute a DNA-binding region (HMG box). The segment at 357-385 (SHFNSSNEEQRSNTPIGDYPSRAKISGQN) is disordered.

It belongs to the maelstrom family. Interacts with SMARCB1, SIN3B and DDX4. Interacts with piRNA-associated proteins TDRD1, PIWIL1 and PIWIL2. Interacts with TEX19. In terms of tissue distribution, testis-specific. Expressed in various cancer cell lines, probably due to demethylation of its promoter.

The protein resides in the cytoplasm. It localises to the nucleus. Plays a central role during spermatogenesis by repressing transposable elements and preventing their mobilization, which is essential for the germline integrity. Acts via the piRNA metabolic process, which mediates the repression of transposable elements during meiosis by forming complexes composed of piRNAs and Piwi proteins and governs the methylation and subsequent repression of transposons. Its association with piP-bodies suggests a participation in the secondary piRNAs metabolic process. Required for the localization of germ-cell factors to the meiotic nuage. The sequence is that of Protein maelstrom homolog (MAEL) from Homo sapiens (Human).